Consider the following 311-residue polypeptide: Methionyl-tRNA formyltransferase (311 aa).

Position 117 to 120 (117 to 120 (SLLP)) interacts with (6S)-5,6,7,8-tetrahydrofolate.

It belongs to the Fmt family.

It catalyses the reaction L-methionyl-tRNA(fMet) + (6R)-10-formyltetrahydrofolate = N-formyl-L-methionyl-tRNA(fMet) + (6S)-5,6,7,8-tetrahydrofolate + H(+). Functionally, attaches a formyl group to the free amino group of methionyl-tRNA(fMet). The formyl group appears to play a dual role in the initiator identity of N-formylmethionyl-tRNA by promoting its recognition by IF2 and preventing the misappropriation of this tRNA by the elongation apparatus. The polypeptide is Methionyl-tRNA formyltransferase (Bordetella avium (strain 197N)).